The chain runs to 161 residues: MTTRVIYPGTFDPITNGHLDLIERAAAMFDHVVVGIAASPSKKPLFDLPERVALTQAITKHLPNVEIVGFSGLLVDFAKESNANILVRGLRAVSDFEYEFQLANMNRRLMPELETVFLTPSEENSFISSTIVKEVALHKGDVSQFVDLRITGALNAKLHTK.

Residue Thr10 participates in substrate binding. Residues 10–11 (TF) and His18 each bind ATP. Residues Lys42, Leu74, and Arg88 each contribute to the substrate site. Residues 89–91 (GLR), Glu99, and 124–130 (NSFISST) contribute to the ATP site.

This sequence belongs to the bacterial CoaD family. In terms of assembly, homohexamer. Mg(2+) serves as cofactor.

It is found in the cytoplasm. It catalyses the reaction (R)-4'-phosphopantetheine + ATP + H(+) = 3'-dephospho-CoA + diphosphate. Its pathway is cofactor biosynthesis; coenzyme A biosynthesis; CoA from (R)-pantothenate: step 4/5. Its function is as follows. Reversibly transfers an adenylyl group from ATP to 4'-phosphopantetheine, yielding dephospho-CoA (dPCoA) and pyrophosphate. This is Phosphopantetheine adenylyltransferase from Photobacterium profundum (strain SS9).